The sequence spans 706 residues: MGKEQQLYYGKHGTPQKYDPAFRGPIYNRGCTDIICCVFLFLAIVGYVAVGIIAWTHGDPRKVIYPTDSRGQFCGQKGTKNENKPFLFYFNIVKCASPLVLLEFQCPTPQICVEKCPSRYLTYLNAHASEDFEYYKQYCLPGFQKNKGVAEVLRDGDCPAVLIPSKPFAQRCFPAVHAHKGILMVGNETTYEDGLGSRKNITELVEGAKKASGILEARQLAMRIFEDYTVSWYWIIIGLIIAMVLSLLFIILLRFLAGIMVWVMIVMVILVLGYGILHCYMEYARLRGEAGSDVSLVDLGFQTDFRVYLHLRQTWVAFMIILSIVEVIIILLLIFLRKRILIAIALIKEASRAVGYVMCSLLYPLVTFFLLCLCIAYWASTAIFLSTSNEAVYKIFNETSCPVAGKTCNPETFPSSNESRLCPGAHCQFAFYGGESTYHRALLGLQIFNVFMFFWLANFVLALGQVTLAGAFASYYWAMNKPDDLPAFPLFSAFGRALRYHTGSLAFGSLLLAIVQVIRVILEYLDQRLKAAENKFAKFLMSCLKCCFWCLEKFIKFLNRNAYIMIAIYGTNFCTSARNAFFLLMRNIIRVAVLDKVTDFLFLLGKLLIVGSVGILAFFFFTHRIRIVQDTAPSLNYYWVPVVTVVIGSYLIAHGFFSVYGMCVDTLFLCFLEDLERNDGTPERPYFMSLTLKKILNKTNKRQAEA.

Residues 1-33 (MGKEQQLYYGKHGTPQKYDPAFRGPIYNRGCTD) lie on the Cytoplasmic side of the membrane. A Phosphothreonine modification is found at Thr-14. Residues 34-54 (IICCVFLFLAIVGYVAVGIIA) form a helical membrane-spanning segment. Over 55-232 (WTHGDPRKVI…RIFEDYTVSW (178 aa)) the chain is Extracellular. N-linked (GlcNAc...) asparagine glycosylation is found at Asn-187 and Asn-200. A helical transmembrane segment spans residues 233–253 (YWIIIGLIIAMVLSLLFIILL). Residues 254-256 (RFL) are Cytoplasmic-facing. The chain crosses the membrane as a helical span at residues 257–277 (AGIMVWVMIVMVILVLGYGIL). Topologically, residues 278-315 (HCYMEYARLRGEAGSDVSLVDLGFQTDFRVYLHLRQTW) are extracellular. Residues 316-336 (VAFMIILSIVEVIIILLLIFL) form a helical membrane-spanning segment. Residues 337–364 (RKRILIAIALIKEASRAVGYVMCSLLYP) are Cytoplasmic-facing. The chain crosses the membrane as a helical span at residues 365-385 (LVTFFLLCLCIAYWASTAIFL). Topologically, residues 386 to 457 (STSNEAVYKI…FNVFMFFWLA (72 aa)) are extracellular. N-linked (GlcNAc...) asparagine glycosylation is found at Asn-397 and Asn-417. A helical membrane pass occupies residues 458-480 (NFVLALGQVTLAGAFASYYWAMN). The Cytoplasmic segment spans residues 481-504 (KPDDLPAFPLFSAFGRALRYHTGS). Residues 505-525 (LAFGSLLLAIVQVIRVILEYL) traverse the membrane as a helical segment. Topologically, residues 526–563 (DQRLKAAENKFAKFLMSCLKCCFWCLEKFIKFLNRNAY) are extracellular. The chain crosses the membrane as a helical span at residues 564 to 584 (IMIAIYGTNFCTSARNAFFLL). Over 585–599 (MRNIIRVAVLDKVTD) the chain is Cytoplasmic. The chain crosses the membrane as a helical span at residues 600-620 (FLFLLGKLLIVGSVGILAFFF). At 621 to 638 (FTHRIRIVQDTAPSLNYY) the chain is on the extracellular side. Residues 639–659 (WVPVVTVVIGSYLIAHGFFSV) traverse the membrane as a helical segment. Topologically, residues 660–706 (YGMCVDTLFLCFLEDLERNDGTPERPYFMSLTLKKILNKTNKRQAEA) are cytoplasmic.

The protein belongs to the CTL (choline transporter-like) family. As to quaternary structure, interacts with COCH. In terms of processing, N-glycosylated.

Its subcellular location is the cell membrane. The protein localises to the mitochondrion outer membrane. It carries out the reaction choline(out) + n H(+)(in) = choline(in) + n H(+)(out). The enzyme catalyses ethanolamine(out) + n H(+)(in) = ethanolamine(in) + n H(+)(out). Choline/H+ antiporter, mainly in mitochodria. Also acts as a low-affinity ethanolamine/H+ antiporter, regulating the supply of extracellular ethanolamine (Etn) for the CDP-Etn pathway, redistribute intracellular Etn and balance the CDP-Cho and CDP-Etn arms of the Kennedy pathway. This is Choline transporter-like protein 2 (SLC44A2) from Bos taurus (Bovine).